A 49-amino-acid polypeptide reads, in one-letter code: Osteocalcin (49 aa).

The Gla domain occupies 1–47 (YLDHWLGAPAPYPDPLEPRREVCELNPDCDELADHIGFQEAYRRFYG). Residue Pro-9 is modified to Hydroxyproline. Residues Glu-17, Glu-21, Glu-24, and Asp-30 each contribute to the Ca(2+) site. 4-carboxyglutamate is present on residues Glu-17, Glu-21, and Glu-24. An intrachain disulfide couples Cys-23 to Cys-29.

This sequence belongs to the osteocalcin/matrix Gla protein family. Gamma-carboxyglutamate residues are formed by vitamin K dependent carboxylation by GGCX. These residues are essential for the binding of calcium. Decarboxylation promotes the hormone activity.

Its subcellular location is the secreted. Its function is as follows. The carboxylated form is one of the main organic components of the bone matrix, which constitutes 1-2% of the total bone protein. It acts as a negative regulator of bone formation and is required to limit bone formation without impairing bone resorption or mineralization. The carboxylated form binds strongly to apatite and calcium. In terms of biological role, the uncarboxylated form acts as a hormone secreted by osteoblasts, which regulates different cellular processes, such as energy metabolism, male fertility and brain development. Regulates of energy metabolism by acting as a hormone favoring pancreatic beta-cell proliferation, insulin secretion and sensitivity and energy expenditure. Uncarboxylated osteocalcin hormone also promotes testosterone production in the testes: acts as a ligand for G protein-coupled receptor GPRC6A at the surface of Leydig cells, initiating a signaling response that promotes the expression of enzymes required for testosterone synthesis in a CREB-dependent manner. Also acts as a regulator of brain development: osteocalcin hormone crosses the blood-brain barrier and acts as a ligand for GPR158 on neurons, initiating a signaling response that prevents neuronal apoptosis in the hippocampus, favors the synthesis of all monoamine neurotransmitters and inhibits that of gamma-aminobutyric acid (GABA). Osteocalcin also crosses the placenta during pregnancy and maternal osteocalcin is required for fetal brain development. The protein is Osteocalcin (BGLAP) of Equus caballus (Horse).